The following is a 1018-amino-acid chain: Calcium-transporting ATPase sarcoplasmic/endoplasmic reticulum type (1018 aa).

The Cytoplasmic segment spans residues 1–48 (MEDGHSKTVDEVLSHFRVDPERGLSLDQVKEYQKKYGPNELPAEEGKT). A helical transmembrane segment spans residues 49 to 69 (LWQLVLEQFDDLLVKILLLAA). Residues 70 to 88 (IISFVLALFEEHEGVEAFV) are Lumenal-facing. A helical transmembrane segment spans residues 89–109 (EPFVILLILIANAVVGVWQER). Over 110–252 (NAESAIEALK…EIKTPLQQKL (143 aa)) the chain is Cytoplasmic. Residues 253–272 (DEFGEQLSKVISLICVAVWA) traverse the membrane as a helical segment. The Lumenal portion of the chain corresponds to 273–294 (INIGHFNDPAHGGSWIKGAVYY). A helical transmembrane segment spans residues 295–312 (FKIAVALAVAAIPEGLPA). Ca(2+) is bound by residues Val303, Ala304, Ile306, and Glu308. Topologically, residues 313 to 756 (VITTCLALGT…EEGRAIYNNM (444 aa)) are cytoplasmic. Asp350 (4-aspartylphosphate intermediate) is an active-site residue. Mg(2+)-binding residues include Asp702 and Asp706. Residues 757-776 (KQFIRYLISSNIGEVVSIFL) traverse the membrane as a helical segment. The Ca(2+) site is built by Asn767 and Glu770. At 777–786 (TAALGLPEAL) the chain is on the lumenal side. The helical transmembrane segment at 787 to 807 (IPVQLLWVNLVTDGLPATALG) threads the bilayer. Residues Asn795, Thr798, and Asp799 each contribute to the Ca(2+) site. Residues 808 to 827 (FNPPDLDIMTKPPRKADEGL) lie on the Cytoplasmic side of the membrane. The chain crosses the membrane as a helical span at residues 828–850 (ISGWLFFRYMAIGGYVGCATVGG). At 851 to 896 (AAWWFMFSETGPQLSYWQLTHHLSCLGGGEEFKGIDCKIFNDPHPM) the chain is on the lumenal side. Residues 897 to 916 (TMALSVLVTIEMLNAMNSLS) form a helical membrane-spanning segment. Glu907 contributes to the Ca(2+) binding site. Over 917–929 (ENQSLVQMPPWCN) the chain is Cytoplasmic. A helical transmembrane segment spans residues 930–948 (IWLIASMCLSFALHFVILY). Residues 949–963 (VDVLSTVFQVTPLDG) are Lumenal-facing. The helical transmembrane segment at 964-984 (NEWMTVMKFSLPVVLLDEILK) threads the bilayer. Topologically, residues 985–1018 (FVARRISDGESYIKNMHGLVLAWAVFFAYIIWGP) are cytoplasmic.

Belongs to the cation transport ATPase (P-type) (TC 3.A.3) family.

It localises to the endoplasmic reticulum membrane. The protein resides in the sarcoplasmic reticulum membrane. It catalyses the reaction Ca(2+)(in) + ATP + H2O = Ca(2+)(out) + ADP + phosphate + H(+). This magnesium-dependent enzyme catalyzes the hydrolysis of ATP coupled with the transport of calcium. In Anopheles gambiae (African malaria mosquito), this protein is Calcium-transporting ATPase sarcoplasmic/endoplasmic reticulum type.